The following is a 151-amino-acid chain: Aspartate carbamoyltransferase regulatory chain (151 aa).

Positions 108, 113, 136, and 139 each coordinate Zn(2+).

Belongs to the PyrI family. As to quaternary structure, contains catalytic and regulatory chains. The cofactor is Zn(2+).

Functionally, involved in allosteric regulation of aspartate carbamoyltransferase. This Porphyromonas gingivalis (strain ATCC 33277 / DSM 20709 / CIP 103683 / JCM 12257 / NCTC 11834 / 2561) protein is Aspartate carbamoyltransferase regulatory chain.